Here is a 400-residue protein sequence, read N- to C-terminus: MEDGVYEPPDLTPEERMELENIRRRKQELLVEIQRLREELSEAMSEVEGLEANEGSKTLQRNRKMAMGRKKFNMDPKKGIQFLVEHELLQNTPEEIARFLYKGEGLNKTAIGDYLGEREELNLSVLHAFVDLHEFTDLNLVQALRQFLWSFRLPGEAQKIDRMMEAFAQRYCLCNPGVFQSTDTCYVLSFAVIMLNTSLHNPNVRDKPGLERFVAMNRGINEGGDLPEDLLRNLYDSIRNEPFKIPEDDGNDLTHTFFNPDREGWLLKLGGGRVKTWKRRWFILTDNCLYYFEYTTDKEPRGIIPLENLSIREVDDPRKPNCFELYIPNNKGQLIKACKTEADGRVVEGNHMVYRISAPTQEEKDEWIKSIQAAVSVDPFYEMLAARKKRISVKKKQEQP.

A coiled-coil region spans residues 10–67 (DLTPEERMELENIRRRKQELLVEIQRLREELSEAMSEVEGLEANEGSKTLQRNRKMAM). Residues 72–201 (FNMDPKKGIQ…VIMLNTSLHN (130 aa)) enclose the SEC7 domain. Residues 259–376 (NPDREGWLLK…WIKSIQAAVS (118 aa)) enclose the PH domain. Residues 268–276 (KLGGGRVKT), R280, Y291, R301, K339, N350, and H351 contribute to the a 1,2-diacyl-sn-glycero-3-phospho-(1D-myo-inositol-3,4,5-trisphosphate) site. Positions 387-395 (RKKRISVKK) are C-terminal autoinhibitory region.

In terms of assembly, heteromer. Composed of TAMALIN, CYTH2 and at least one GRM1. Interacts with ARRB1. Interacts with ARL4D; the interaction is direct. Directly interacts with CCDC120 through the coiled coil domain; this interaction stabilizes CCDC120, possibly by preventing its ubiquitination, and is required for neurite growth in a neuroblastoma cell line. Interacts with FRMD4A. Interacts (via N-terminal domain) with INAVA (via N-terminal domain). As to expression, present in all tissues tested, with highest protein levels in brain and adrenal.

It is found in the cell membrane. It localises to the cytoplasm. Its subcellular location is the cell projection. The protein resides in the growth cone. The protein localises to the cell junction. It is found in the tight junction. It localises to the adherens junction. Acts as a guanine-nucleotide exchange factor (GEF). Promotes guanine-nucleotide exchange on ARF1, ARF3 and ARF6. Activates ARF factors through replacement of GDP with GTP. The cell membrane form, in association with ARL4 proteins, recruits ARF6 to the plasma membrane. Involved in neurite growth. This is Cytohesin-2 (Cyth2) from Mus musculus (Mouse).